A 1957-amino-acid chain; its full sequence is Sporulation-specific protein 15 (1957 aa).

2 stretches are compositionally biased toward low complexity: residues M1–S12 and A19–S28. Residues M1–T102 form a disordered region. Positions S58–I83 are enriched in basic and acidic residues. A compositionally biased stretch (polar residues) spans S90–T102. S105 is subject to Phosphoserine. Coiled coils occupy residues K199–L785, V804–D1235, K1320–D1471, and E1481–E1723.

The protein belongs to the MPC70 family. In terms of assembly, monomer.

The protein localises to the cytoplasm. It is found in the cytoskeleton. Its subcellular location is the microtubule organizing center. The protein resides in the spindle pole body. Functionally, has a role in the initiation of spore membrane formation. This Schizosaccharomyces pombe (strain 972 / ATCC 24843) (Fission yeast) protein is Sporulation-specific protein 15 (spo15).